The sequence spans 192 residues: Cytochrome b-245 light chain (192 aa).

Over 2-7 (GQIEWA) the chain is Cytoplasmic. The chain crosses the membrane as a helical span at residues 8–30 (MWANEQALASGLILITGGIVATA). The Extracellular segment spans residues 31–35 (GRFTQ). A helical transmembrane segment spans residues 36-53 (WYFGAYSIAAGVLICLLE). The Cytoplasmic segment spans residues 54 to 69 (YPRGKRKKGSTMERCG). Residues 70–80 (QKYLTSVVKLF) lie within the membrane without spanning it. The Cytoplasmic portion of the chain corresponds to 81–86 (GPLTRN). A helical membrane pass occupies residues 87–104 (YYVRAALHFLLSVPAGFL). Leu-105 is a topological domain (extracellular). Residues 106 to 126 (ATILGTVCLAIASVIYLLAAI) traverse the membrane as a helical segment. Residues 127–192 (RGEQWTPIEP…NPMPVTDEVV (66 aa)) are Cytoplasmic-facing. The tract at residues 134–192 (IEPKPKERPQVGGTIKQPPTNPPPRPPAEVRKKPSEGEEEAASAGGPQVNPMPVTDEVV) is disordered. The residue at position 147 (Thr-147) is a Phosphothreonine. Lys-149 participates in a covalent cross-link: Glycyl lysine isopeptide (Lys-Gly) (interchain with G-Cter in ubiquitin). Residues Ser-168 and Ser-176 each carry the phosphoserine modification.

The protein belongs to the p22phox family. Component of the phagocyte NADPH oxidase core complex/cytochrome b558 complex, composed of CYBB (heavy chain (beta)) and CYBA (light chain (alpha)). Component of the phagocyte NADPH oxidase complex composed of an obligatory core heterodimer formed by the membrane proteins CYBA and CYBB and the cytosolic regulatory subunits NCF1/p47-phox, NCF2/p67-phox, NCF4/p40-phox and the small GTPase RAC1 or RAC2. Interacts with NCF1 (via SH3 domain). Interacts with SH3PXD2A. Interacts with DUOX1, DUOX2 and TPO. Interacts with NOX4; this interaction mediates superoxide generation. Interacts with calprotectin (S100A8/9). Interacts with GBP7. Interacts with NOXO1. Forms a heterodimer with NOX3 and is essential for activity and cell membrane localization of NOX3. Interacts with NOX1. Post-translationally, ubiquitinated at Lys-149 likely by RNF145. Phosphorylation at Thr-147 enhances NADPH oxidase activity by promoting NCF1/p47-phox binding. In terms of tissue distribution, the strongest level of expression is found in kidney, peritoneal neutrophils and peritoneal macrophages, and a lower level in spleen and small intestine. Very low level of expression can be noted in brain, liver, testis, and heart.

The protein localises to the cell membrane. In terms of biological role, subunit of NADPH oxidase complexes that is required for the NADPH oxidase activity that generates, in various cell types, superoxide from molecular oxygen utilizing NADPH as an electron donor. Subunit of the phagocyte NADPH oxidase complex that mediates the transfer of electrons from cytosolic NADPH to O2 to produce the superoxide anion (O2(-)). In the activated complex, electrons are first transferred from NADPH to flavin adenine dinucleotide (FAD) and subsequently transferred via two heme molecules to molecular oxygen, producing superoxide through an outer-sphere reaction. Activation of the NADPH oxidase complex is initiated by the assembly of cytosolic subunits of the NADPH oxidase complex with the core NADPH oxidase complex to form a complex at the plasma membrane or phagosomal membrane. This activation process is initiated by phosphorylation dependent binding of the cytosolic NCF1/p47-phox subunit to the C-terminus of CYBA/p22-phox. Aassociates with NOX3 to form a functional NADPH oxidase constitutively generating superoxide. This Mus musculus (Mouse) protein is Cytochrome b-245 light chain.